The sequence spans 322 residues: Cysteine protease YopT (322 aa).

The interval 43-72 is disordered; the sequence is SHSNRQKKLSATIKHNQSSRSMLDRKLTSD. Residues Cys139, His258, and Asp274 contribute to the active site.

The protein belongs to the peptidase C58 family. In terms of assembly, interacts with human ARHA.

Its subcellular location is the secreted. Functionally, cysteine protease, which is translocated into infected cells and plays a central role in pathogenesis by cleaving the C-terminus end of the human small GTPase RhoA/ARHA, a regulator of cytoskeleton. Once cleaved, ARHA loses its lipid modification, and is released from the cell membrane, leading to the subsequent disruption of actin cytoskeleton of the host cell. This Yersinia enterocolitica protein is Cysteine protease YopT (yopT).